Reading from the N-terminus, the 666-residue chain is Endogenous retrovirus group K member 21 Gag polyprotein (666 aa).

The N-myristoyl glycine moiety is linked to residue G2. Disordered stretches follow at residues 165–189 (GKGP…AGQV) and 217–264 (ELQY…GSEL). Residues 232–247 (GMPPAPQGRAPYPQPP) are compositionally biased toward pro residues. CCHC-type zinc fingers lie at residues 544–561 (GKCY…NCPV) and 580–597 (DLCP…QCRS). The interval 598–641 (KFDKNGQPLSGNEQRGQPQAPQQTGAFPIQPFVPQGFQGQQPPL) is disordered. The segment covering 604 to 622 (QPLSGNEQRGQPQAPQQTG) has biased composition (polar residues). Positions 624–640 (FPIQPFVPQGFQGQQPP) are enriched in low complexity.

This sequence belongs to the beta type-B retroviral Gag protein family. HERV class-II K(HML-2) gag subfamily. Myristoylation is essential for retroviral assembly. Alteration of the glycine residue leads to a block in the budding of particles and an accumulation of Gag inside the cell. In terms of processing, specific enzymatic cleavages may yield mature proteins.

It localises to the cell membrane. Its function is as follows. The products of the Gag polyproteins of infectious retroviruses perform highly complex orchestrated tasks during the assembly, budding, maturation, and infection stages of the viral replication cycle. During viral assembly, the proteins form membrane associations and self-associations that ultimately result in budding of an immature virion from the infected cell. Gag precursors also function during viral assembly to selectively bind and package two plus strands of genomic RNA. Endogenous Gag proteins may have kept, lost or modified their original function during evolution. The sequence is that of Endogenous retrovirus group K member 21 Gag polyprotein (ERVK-21) from Homo sapiens (Human).